The following is a 149-amino-acid chain: Low molecular weight protein-tyrosine-phosphatase Wzb (149 aa).

The Nucleophile role is filled by C9. R15 is an active-site residue. D115 serves as the catalytic Proton donor.

Belongs to the low molecular weight phosphotyrosine protein phosphatase family.

It carries out the reaction O-phospho-L-tyrosyl-[protein] + H2O = L-tyrosyl-[protein] + phosphate. It participates in glycan metabolism; exopolysaccharide biosynthesis. In terms of biological role, dephosphorylates Wzc. Required for the extracellular polysaccharide colanic acid synthesis. Probably involved in the export of colanic acid from the cell to medium. Involved in protection of cells against contact-dependent growth inhibition (CDI). This Salmonella typhimurium (strain LT2 / SGSC1412 / ATCC 700720) protein is Low molecular weight protein-tyrosine-phosphatase Wzb (wzb).